The following is a 300-amino-acid chain: Estradiol 17-beta-dehydrogenase 11 (300 aa).

A signal peptide spans 1–18 (MKILLDLLLLLPLLIVCC). 40–67 (LITGAGHGIGRLTAYEFAKLKSKLVLWD) is an NADP(+) binding site. Residue Ser-172 participates in substrate binding. Tyr-185 (proton acceptor) is an active-site residue. Lys-189 is an NADP(+) binding site.

The protein belongs to the short-chain dehydrogenases/reductases (SDR) family. 17-beta-HSD 3 subfamily.

Its subcellular location is the endoplasmic reticulum. The protein localises to the lipid droplet. It catalyses the reaction 17beta-estradiol + NAD(+) = estrone + NADH + H(+). It carries out the reaction 17beta-estradiol + NADP(+) = estrone + NADPH + H(+). Functionally, can convert androstan-3-alpha,17-beta-diol (3-alpha-diol) to androsterone in vitro, suggesting that it may participate in androgen metabolism during steroidogenesis. May act by metabolizing compounds that stimulate steroid synthesis and/or by generating metabolites that inhibit it. Has no activity toward DHEA (dehydroepiandrosterone), or A-dione (4-androste-3,17-dione), and only a slight activity toward testosterone to A-dione. The sequence is that of Estradiol 17-beta-dehydrogenase 11 (HSD17B11) from Macaca fascicularis (Crab-eating macaque).